A 532-amino-acid polypeptide reads, in one-letter code: Muscarinic acetylcholine receptor M5 (532 aa).

The Extracellular segment spans residues 1 to 29; the sequence is MEGESYHNETTVNGTPVNHQALERHGLWE. N8 carries N-linked (GlcNAc...) asparagine glycosylation. Residues 30–53 traverse the membrane as a helical segment; sequence VITIAAVTAVVSLMTIVGNVLVMI. At 54-66 the chain is on the cytoplasmic side; sequence SFKVNSQLKTVNN. A helical transmembrane segment spans residues 67–87; the sequence is YYLLSLACADLIIGIFSMNLY. Residues 88-104 lie on the Extracellular side of the membrane; it reads TTYILMGRWVLGSLACD. C103 and C183 are disulfide-bonded. The chain crosses the membrane as a helical span at residues 105-126; it reads LWLALDYVASNASVMNLLVISF. At 127 to 146 the chain is on the cytoplasmic side; sequence DRYFSITRPLTYRAKRTPKR. A helical membrane pass occupies residues 147 to 169; sequence AGIMIGLAWLVSFILWAPAILCW. Topologically, residues 170–191 are extracellular; the sequence is QYLVGKRTVPPDECQIQFLSEP. A helical membrane pass occupies residues 192 to 214; the sequence is TITFGTAIAAFYIPVSVMTILYC. The Cytoplasmic portion of the chain corresponds to 215–443; that stretch reads RIYRETEKRT…LVKERKAAQT (229 aa). Residues 265–290 form a disordered region; the sequence is VRNQASWSSSRRSTSTTGKPTQATDL. The segment covering 270–281 has biased composition (low complexity); that stretch reads SWSSSRRSTSTT. A helical membrane pass occupies residues 444–464; sequence LSAILLAFIITWTPYNIMVLV. At 465–478 the chain is on the extracellular side; sequence STFCDKCVPVTLWH. A helical membrane pass occupies residues 479–498; sequence LGYWLCYVNSTINPICYALC. Residues 499-532 are Cytoplasmic-facing; it reads NRTFRKTFKLLLLCRWKKKKVEEKLYWQGNSKLP. T501 and T505 each carry phosphothreonine.

Belongs to the G-protein coupled receptor 1 family. Muscarinic acetylcholine receptor subfamily. CHRM5 sub-subfamily.

Its subcellular location is the cell membrane. The protein localises to the postsynaptic cell membrane. Its function is as follows. The muscarinic acetylcholine receptor mediates various cellular responses, including inhibition of adenylate cyclase, breakdown of phosphoinositides and modulation of potassium channels through the action of G proteins. Primary transducing effect is Pi turnover. This chain is Muscarinic acetylcholine receptor M5 (Chrm5), found in Mus musculus (Mouse).